The primary structure comprises 89 residues: Small ribosomal subunit protein uS15 (89 aa).

This sequence belongs to the universal ribosomal protein uS15 family. Part of the 30S ribosomal subunit. Forms a bridge to the 50S subunit in the 70S ribosome, contacting the 23S rRNA.

Its function is as follows. One of the primary rRNA binding proteins, it binds directly to 16S rRNA where it helps nucleate assembly of the platform of the 30S subunit by binding and bridging several RNA helices of the 16S rRNA. Forms an intersubunit bridge (bridge B4) with the 23S rRNA of the 50S subunit in the ribosome. This is Small ribosomal subunit protein uS15 from Escherichia coli O157:H7.